Reading from the N-terminus, the 484-residue chain is Protein DETOXIFICATION 33 (484 aa).

Residues 1–16 (MGKDKTLPLLDPREPP) show a composition bias toward basic and acidic residues. The segment at 1 to 22 (MGKDKTLPLLDPREPPELTGTK) is disordered. 12 consecutive transmembrane segments (helical) span residues 39–59 (LWEL…LGAL), 81–101 (VISG…ETLC), 122–142 (VILF…PPIL), 155–175 (AGKF…NFPI), 190–210 (WISG…ILYF), 218–238 (AITL…YILI), 267–287 (ALML…TGLL), 294–314 (VDAI…SIGF), 338–358 (VIVV…VVLA), 380–400 (IAVL…LSGV), 409–429 (LVAY…GLVL), and 439–459 (GIWG…IGII).

Belongs to the multi antimicrobial extrusion (MATE) (TC 2.A.66.1) family.

The protein resides in the membrane. The sequence is that of Protein DETOXIFICATION 33 from Arabidopsis thaliana (Mouse-ear cress).